The sequence spans 125 residues: Fluoride-specific ion channel FluC (125 aa).

Transmembrane regions (helical) follow at residues 4–24 (IALV…VGVW), 35–55 (WGTL…VELV), 68–88 (FLVT…LDAV), and 100–120 (AFYI…GLAL). Na(+) contacts are provided by G75 and T78.

It belongs to the fluoride channel Fluc/FEX (TC 1.A.43) family.

It is found in the cell inner membrane. It carries out the reaction fluoride(in) = fluoride(out). Na(+) is not transported, but it plays an essential structural role and its presence is essential for fluoride channel function. In terms of biological role, fluoride-specific ion channel. Important for reducing fluoride concentration in the cell, thus reducing its toxicity. In Agrobacterium fabrum (strain C58 / ATCC 33970) (Agrobacterium tumefaciens (strain C58)), this protein is Fluoride-specific ion channel FluC.